A 334-amino-acid polypeptide reads, in one-letter code: Nucleoid-associated protein SG1574 (334 aa).

It belongs to the YejK family.

Its subcellular location is the cytoplasm. The protein localises to the nucleoid. The chain is Nucleoid-associated protein SG1574 from Sodalis glossinidius (strain morsitans).